The chain runs to 685 residues: DNA ligase (685 aa).

NAD(+) contacts are provided by residues 34–38 (DAVFD), 83–84 (SL), and Glu113. Lys115 acts as the N6-AMP-lysine intermediate in catalysis. The NAD(+) site is built by Arg136, Glu173, Lys297, and Lys321. Residues Cys415, Cys418, Cys433, and Cys438 each contribute to the Zn(2+) site. Positions 607–685 (QEKLQFSGKT…EQELMTLISN (79 aa)) constitute a BRCT domain.

This sequence belongs to the NAD-dependent DNA ligase family. LigA subfamily. Requires Mg(2+) as cofactor. The cofactor is Mn(2+).

It catalyses the reaction NAD(+) + (deoxyribonucleotide)n-3'-hydroxyl + 5'-phospho-(deoxyribonucleotide)m = (deoxyribonucleotide)n+m + AMP + beta-nicotinamide D-nucleotide.. DNA ligase that catalyzes the formation of phosphodiester linkages between 5'-phosphoryl and 3'-hydroxyl groups in double-stranded DNA using NAD as a coenzyme and as the energy source for the reaction. It is essential for DNA replication and repair of damaged DNA. The polypeptide is DNA ligase (Prochlorococcus marinus (strain SARG / CCMP1375 / SS120)).